We begin with the raw amino-acid sequence, 335 residues long: MSGPALKVAITQAQPKWLDLAGSVEKTVNLIAEAAKGDARLVAFPECWIPGYPGWIWQRPVDPIINTKYIQNSLSVNSAEMNTIKSAAKENNIAVVLGFVEAIDTHSVYIAQAIISPKGELLMHRRKIKPTHMERTVFGDGSGSDLTNVADVDFGGDIGVVKVGTLACWEHALPLLKYHTYSQKEAIHIAMWPPIDPHPGVDAPALWSMSAEGCQNLSQTHAIEGGAYVLHCTAVCNEEGIEGMKTKGGLLFQEPGGGHSAAIAPDGRRLTKPLADGNPAAEGIVYADLDMARVVMNKGFIDVVGHYSRPDLLWLGVDKAQKGCVVPKREPEQDV.

Residues 6–291 form the CN hydrolase domain; it reads LKVAITQAQP…EGIVYADLDM (286 aa). The Proton acceptor role is filled by Glu46. Lys127 is an active-site residue. Residue Cys168 is the Nucleophile of the active site.

It belongs to the carbon-nitrogen hydrolase superfamily. Nitrilase family.

It carries out the reaction a nitrile + 2 H2O = a carboxylate + NH4(+). The catalysed reaction is 4-chlorophenylacetonitrile + 2 H2O = 4-chlorophenylacetate + NH4(+). Nitrilase that hydrolyzes preferentially phenylacetonitrile, (R,S)-mandelonitrile, and 3-indolylacetonitrile. The polypeptide is Arylacetonitrilase (Arthroderma benhamiae (strain ATCC MYA-4681 / CBS 112371) (Trichophyton mentagrophytes)).